A 419-amino-acid chain; its full sequence is UPF0229 protein Tbd_1233 (419 aa).

Residues 85–108 (GDRIDRPAGEGGGGSGGSPDGEGM) form a disordered region. The segment covering 93–104 (GEGGGGSGGSPD) has biased composition (gly residues).

The protein belongs to the UPF0229 family.

The sequence is that of UPF0229 protein Tbd_1233 from Thiobacillus denitrificans (strain ATCC 25259 / T1).